The primary structure comprises 799 residues: High affinity nerve growth factor receptor (799 aa).

A signal peptide spans 1 to 32; it reads MLRGQRHGQLGWHRPAAGLGGLVTSLMLACAC. The Extracellular portion of the chain corresponds to 33–418; sequence AASCRETCCP…DPVEKKDETP (386 aa). Intrachain disulfides connect C36–C41 and C40–C50. N-linked (GlcNAc...) asparagine glycosylation occurs at N67. 2 LRR repeats span residues 90 to 113 and 116 to 137; these read LGEL…AFHF and RLSH…TVQG. N121, N190, N204, N255, N264, N320, N325, N341, N361, and N404 each carry an N-linked (GlcNAc...) asparagine glycan. Positions 148-219 constitute an LRRCT domain; the sequence is NPLHCSCALL…GDDVFLQCQV (72 aa). Residues C154 and C193 are joined by a disulfide bond. Ig-like C2-type domains lie at 196–285 and 295–368; these read PSVK…VSVS and AVEQ…LAAN. 2 cysteine pairs are disulfide-bonded: C217/C267 and C302/C348. Residues 419–442 form a helical membrane-spanning segment; that stretch reads FGVSVAVGLAVSAALFLSALLLVL. Topologically, residues 443-799 are cytoplasmic; the sequence is NKCGQRSKFG…APPSYLDVLG (357 aa). The tract at residues 472 to 493 is interaction with SQSTM1; the sequence is MTLGGSSLSPTEGKGSGLQGHI. Y499 is modified (phosphotyrosine; by autocatalysis). Positions 513–784 constitute a Protein kinase domain; the sequence is IILKWELGEG…LSMKDVHARL (272 aa). ATP contacts are provided by residues 519–527 and K547; that span reads LGEGAFGKV. D653 (proton acceptor) is an active-site residue. Phosphotyrosine; by autocatalysis occurs at positions 679, 683, 684, and 794.

This sequence belongs to the protein kinase superfamily. Tyr protein kinase family. Insulin receptor subfamily. Exists in a dynamic equilibrium between monomeric (low affinity) and dimeric (high affinity) structures. Homodimerization is induced by binding of a NGF dimer. Found in a complex, at least composed of KIDINS220, MAGI2, NTRK1 and RAPGEF2; the complex is mainly formed at late endosomes in a nerve growth factor (NGF)-dependent manner. Interacts with RAPGEF2; the interaction is strengthened after NGF stimulation. Interacts with SQSTM1; bridges NTRK1 to NGFR. Forms a ternary complex with NGFR and KIDINS220; this complex is affected by the expression levels of KIDINS220 and an increase in KIDINS220 expression leads to a decreased association of NGFR and NTRK1. Interacts (phosphorylated upon activation by NGF) with SHC1; mediates SHC1 phosphorylation and activation. Interacts (phosphorylated upon activation by NGF) with PLCG1; mediates PLCG1 phosphorylation and activation. Interacts (phosphorylated) with SH2B1 and SH2B2. Interacts with GRB2. Interacts with PIK3R1. Interacts with FRS2. Interacts with SORT1; may regulate NTRK1 anterograde axonal transport. Interacts with SH2D1A; regulates NTRK1. Interacts with NRADD. Interacts with RAB7A. Interacts with PTPRS. Interacts with USP36; USP36 does not deubiquitinate NTRK1. Interacts with GGA3. Interacts with TSPAN1; this interaction promotes NTRK1 stability. In terms of processing, ligand-mediated autophosphorylation. Interaction with SQSTM1 is phosphotyrosine-dependent. Autophosphorylation at Tyr-499 mediates interaction and phosphorylation of SHC1. N-glycosylated. Post-translationally, ubiquitinated. Undergoes polyubiquitination upon activation; regulated by NGFR. Ubiquitination by NEDD4L leads to degradation. Ubiquitination regulates the internalization of the receptor. In terms of tissue distribution, isoform Trka-II is primarily expressed in neuronal cells; isoform Trka-I is found in non-neuronal tissues.

The protein resides in the cell membrane. It localises to the early endosome membrane. Its subcellular location is the late endosome membrane. The protein localises to the recycling endosome membrane. The catalysed reaction is L-tyrosyl-[protein] + ATP = O-phospho-L-tyrosyl-[protein] + ADP + H(+). Its activity is regulated as follows. The pro-survival signaling effect of NTRK1 in neurons requires its endocytosis into signaling early endosomes and its retrograde axonal transport. This is regulated by different proteins including CFL1, RAC1 and SORT1. NTF3 is unable to induce this signaling probably due to the lability of the NTF3-NTRK1 complex in endosomes. SH2D1A inhibits the autophosphorylation of the receptor, and alters the recruitment and activation of downstream effectors and signaling cascades. Regulated by NGFR. Functionally, receptor tyrosine kinase involved in the development and the maturation of the central and peripheral nervous systems through regulation of proliferation, differentiation and survival of sympathetic and nervous neurons. High affinity receptor for NGF which is its primary ligand. Can also bind and be activated by NTF3/neurotrophin-3. However, NTF3 only supports axonal extension through NTRK1 but has no effect on neuron survival. Upon dimeric NGF ligand-binding, undergoes homodimerization, autophosphorylation and activation. Recruits, phosphorylates and/or activates several downstream effectors including SHC1, FRS2, SH2B1, SH2B2 and PLCG1 that regulate distinct overlapping signaling cascades driving cell survival and differentiation. Through SHC1 and FRS2 activates a GRB2-Ras-MAPK cascade that regulates cell differentiation and survival. Through PLCG1 controls NF-Kappa-B activation and the transcription of genes involved in cell survival. Through SHC1 and SH2B1 controls a Ras-PI3 kinase-AKT1 signaling cascade that is also regulating survival. In absence of ligand and activation, may promote cell death, making the survival of neurons dependent on trophic factors. The protein is High affinity nerve growth factor receptor (Ntrk1) of Rattus norvegicus (Rat).